The chain runs to 276 residues: Halorhodopsin (276 aa).

The propeptide occupies 1-20 (MTAASTTATTVLQATQSDVL). The residue at position 21 (glutamine 21) is a Pyrrolidone carboxylic acid. The next 7 membrane-spanning stretches (helical) occupy residues 31–51 (SSIWVNIALAGVVILLFVAMG), 61–81 (LIWVATMLVPLVSISSYAGLA), 109–129 (YLTWTFSTPMILLALGLLADT), 134–154 (LFTAITMDIGMCVTGLAAALI), 162–182 (WVFYGISCAFFVAVLYVLLVQ), 195–215 (IFGTLKILTVVLWLGYPILWA), and 220–240 (GVALLSVGVTSWGYSGLDILA). Lysine 241 is modified (N6-(retinylidene)lysine).

This sequence belongs to the archaeal/bacterial/fungal opsin family. Post-translationally, the covalent binding of retinal to the apoprotein, bacterioopsin, generates bacteriorhodopsin.

It localises to the membrane. Functionally, light-driven chloride pump. The chain is Halorhodopsin (hop) from Haloarcula marismortui (strain ATCC 43049 / DSM 3752 / JCM 8966 / VKM B-1809) (Halobacterium marismortui).